The chain runs to 286 residues: Master replication protein (286 aa).

Residues 2 to 96 (ARQVICWCFT…VEGPWEFGEF (95 aa)) enclose the CRESS-DNA virus Rep endonuclease domain. Residues 9 to 12 (CFTL) carry the RCR-1 motif. 2 residues coordinate a divalent metal cation: Glu33 and His41. The RCR-2 signature appears at 41–43 (HYQ). The Nuclear localization signal motif lies at 50–70 (KRTSLVQMKKLLPGAHLEKRR). The For DNA cleavage activity role is filled by Tyr79. An RCR-3 motif is present at residues 79-82 (YAMK). Asp84 serves as a coordination point for a divalent metal cation. The Nuclear localization signal motif lies at 96 to 102 (FKEVLED). 180–188 (GPQGGEGKT) is an ATP binding site.

The protein belongs to the nanoviridea/circoviridae replication-associated protein family. In terms of assembly, homooligomer (Potential). Rep binds to repeated DNA motifs (iterons). Requires Mg(2+) as cofactor. Mn(2+) serves as cofactor.

The protein localises to the host nucleus. It catalyses the reaction ATP + H2O = ADP + phosphate + H(+). Functionally, essential for the replication of all genomic viral ssDNA (trans-replication). The closed circular ssDNA genome is first converted to a superhelical dsDNA. Rep binds a specific hairpin at the genome origin of replication. Introduces an endonucleolytic nick within the conserved sequence 5'-A[GT]TATTAC-3' in the intergenic region of the genome, thereby initiating the rolling circle replication (RCR). Following cleavage, binds covalently to the 5'-phosphate of DNA as a tyrosyl ester. The cleavage gives rise to a free 3'-OH that serves as a primer for the cellular DNA polymerase. The polymerase synthesizes the (+) strand DNA by rolling circle mechanism. After one round of replication, a Rep-catalyzed nucleotidyl transfer reaction releases a circular single-stranded virus genome, thereby terminating the replication. Displays origin-specific DNA cleavage, nucleotidyl transferase, ATPase and helicase activities. The chain is Master replication protein (DNA-R) from Subterranean clover stunt virus (strain F) (SCSV).